The chain runs to 493 residues: Probable mannosyl-oligosaccharide alpha-1,2-mannosidase 1B (493 aa).

The N-terminal stretch at 1 to 18 (MHLPSLSVALALVSSSLA) is a signal peptide. N-linked (GlcNAc...) asparagine glycosylation is found at N87 and N174. C324 and C353 are disulfide-bonded. E367 (proton donor) is an active-site residue. An N-linked (GlcNAc...) asparagine glycan is attached at N489.

This sequence belongs to the glycosyl hydrolase 47 family. In terms of assembly, monomer. It depends on Ca(2+) as a cofactor. Mg(2+) serves as cofactor.

It is found in the cytoplasmic vesicle lumen. The catalysed reaction is N(4)-(alpha-D-Man-(1-&gt;2)-alpha-D-Man-(1-&gt;2)-alpha-D-Man-(1-&gt;3)-[alpha-D-Man-(1-&gt;2)-alpha-D-Man-(1-&gt;3)-[alpha-D-Man-(1-&gt;2)-alpha-D-Man-(1-&gt;6)]-alpha-D-Man-(1-&gt;6)]-beta-D-Man-(1-&gt;4)-beta-D-GlcNAc-(1-&gt;4)-beta-D-GlcNAc)-L-asparaginyl-[protein] (N-glucan mannose isomer 9A1,2,3B1,2,3) + 4 H2O = N(4)-(alpha-D-Man-(1-&gt;3)-[alpha-D-Man-(1-&gt;3)-[alpha-D-Man-(1-&gt;6)]-alpha-D-Man-(1-&gt;6)]-beta-D-Man-(1-&gt;4)-beta-D-GlcNAc-(1-&gt;4)-beta-D-GlcNAc)-L-asparaginyl-[protein] (N-glucan mannose isomer 5A1,2) + 4 beta-D-mannose. It catalyses the reaction N(4)-(alpha-D-Man-(1-&gt;2)-alpha-D-Man-(1-&gt;2)-alpha-D-Man-(1-&gt;3)-[alpha-D-Man-(1-&gt;3)-[alpha-D-Man-(1-&gt;2)-alpha-D-Man-(1-&gt;6)]-alpha-D-Man-(1-&gt;6)]-beta-D-Man-(1-&gt;4)-beta-D-GlcNAc-(1-&gt;4)-beta-D-GlcNAc)-L-asparaginyl-[protein] (N-glucan mannose isomer 8A1,2,3B1,3) + 3 H2O = N(4)-(alpha-D-Man-(1-&gt;3)-[alpha-D-Man-(1-&gt;3)-[alpha-D-Man-(1-&gt;6)]-alpha-D-Man-(1-&gt;6)]-beta-D-Man-(1-&gt;4)-beta-D-GlcNAc-(1-&gt;4)-beta-D-GlcNAc)-L-asparaginyl-[protein] (N-glucan mannose isomer 5A1,2) + 3 beta-D-mannose. Its pathway is protein modification; protein glycosylation. In terms of biological role, involved in the maturation of Asn-linked oligosaccharides. Progressively trims alpha-1,2-linked mannose residues from Man(9)GlcNAc(2) to produce Man(5)GlcNAc(2). The chain is Probable mannosyl-oligosaccharide alpha-1,2-mannosidase 1B (mns1B) from Aspergillus fumigatus (strain CBS 144.89 / FGSC A1163 / CEA10) (Neosartorya fumigata).